A 67-amino-acid chain; its full sequence is Mu-conotoxin TsIIIA (67 aa).

Positions 1-20 (MMSKLGVLLTICLLLFPLTA) are cleaved as a signal peptide. Positions 21–48 (VPLDGDQPADQPAERKQNEQHPLFDQKR) are excised as a propeptide. 3 cysteine pairs are disulfide-bonded: cysteine 50–cysteine 59, cysteine 51–cysteine 64, and cysteine 55–cysteine 65.

The protein belongs to the conotoxin M superfamily. As to expression, expressed by the venom duct.

The protein localises to the secreted. In terms of biological role, mu-conotoxins block voltage-gated sodium channels (Nav). This toxin specifically inhibits mammalian Nav1.8/SCN10A sodium currents (IC(50)=2.11 uM) without inducing a shift in the current-voltage relationship of this channel. In vivo, shows potent analgesic activity in a mice hotplate analgesic assay. In addition, this toxin has better analgesic effects than Ziconotide, an analgesic drug. The protein is Mu-conotoxin TsIIIA of Conus tessulatus (Tessellate cone).